The chain runs to 212 residues: Probable transaldolase (212 aa).

Residue K83 is the Schiff-base intermediate with substrate of the active site.

It belongs to the transaldolase family. Type 3B subfamily.

Its subcellular location is the cytoplasm. It carries out the reaction D-sedoheptulose 7-phosphate + D-glyceraldehyde 3-phosphate = D-erythrose 4-phosphate + beta-D-fructose 6-phosphate. It participates in carbohydrate degradation; pentose phosphate pathway; D-glyceraldehyde 3-phosphate and beta-D-fructose 6-phosphate from D-ribose 5-phosphate and D-xylulose 5-phosphate (non-oxidative stage): step 2/3. Its function is as follows. Transaldolase is important for the balance of metabolites in the pentose-phosphate pathway. The polypeptide is Probable transaldolase (tal) (Halalkalibacterium halodurans (strain ATCC BAA-125 / DSM 18197 / FERM 7344 / JCM 9153 / C-125) (Bacillus halodurans)).